Reading from the N-terminus, the 513-residue chain is Probable G-protein coupled receptor 176 (513 aa).

Residues M1–A25 are disordered. The Extracellular portion of the chain corresponds to M1–Q41. 4 N-linked (GlcNAc...) asparagine glycosylation sites follow: N4, N11, N17, and N26. A helical transmembrane segment spans residues F42–S64. The Cytoplasmic portion of the chain corresponds to T65–R77. A helical transmembrane segment spans residues F78–I98. At I99 to W108 the chain is on the extracellular side. A helical transmembrane segment spans residues W109 to V129. The Cytoplasmic portion of the chain corresponds to T130–K157. Residues S158 to F177 form a helical membrane-spanning segment. Residues A178–Y204 lie on the Extracellular side of the membrane. A helical transmembrane segment spans residues V205–I225. Residues L226–H264 are Cytoplasmic-facing. Residues A265 to V285 form a helical membrane-spanning segment. At V286–L301 the chain is on the extracellular side. A helical transmembrane segment spans residues L302–V322. Residues N323 to S513 are Cytoplasmic-facing. Residues V404–V432 form a disordered region.

It belongs to the G-protein coupled receptor 1 family. As to expression, expressed in brain, lung, heart, stomach, intestine, cultured aortic smooth muscle cells and cardiac myocytes.

The protein localises to the cell membrane. Its function is as follows. Orphan receptor involved in normal circadian rhythm behavior. Acts through the G-protein subclass G(z)-alpha and has an agonist-independent basal activity to repress cAMP production. The polypeptide is Probable G-protein coupled receptor 176 (Gpr176) (Rattus norvegicus (Rat)).